The primary structure comprises 309 residues: Homoserine O-succinyltransferase (309 aa).

Cys-142 (acyl-thioester intermediate) is an active-site residue. Residues Lys-163 and Ser-192 each contribute to the substrate site. His-235 (proton acceptor) is an active-site residue. The active site involves Glu-237. Arg-249 is a substrate binding site.

It belongs to the MetA family.

It localises to the cytoplasm. The catalysed reaction is L-homoserine + succinyl-CoA = O-succinyl-L-homoserine + CoA. Its pathway is amino-acid biosynthesis; L-methionine biosynthesis via de novo pathway; O-succinyl-L-homoserine from L-homoserine: step 1/1. In terms of biological role, transfers a succinyl group from succinyl-CoA to L-homoserine, forming succinyl-L-homoserine. This is Homoserine O-succinyltransferase from Klebsiella pneumoniae subsp. pneumoniae (strain ATCC 700721 / MGH 78578).